The primary structure comprises 372 residues: Tribbles homolog 1 (372 aa).

Disordered stretches follow at residues methionine 1 to phenylalanine 23 and glutamate 52 to proline 86. The segment covering tyrosine 59–alanine 75 has biased composition (pro residues). Positions isoleucine 91–phenylalanine 338 constitute a Protein kinase domain. Positions aspartate 355–glutamate 360 match the COP1-binding motif.

This sequence belongs to the protein kinase superfamily. CAMK Ser/Thr protein kinase family. Tribbles subfamily. As to quaternary structure, monomer. Interacts (via protein kinase domain) with CEBPA. Interacts with COP1. Expressed in most human tissues with the highest levels in skeletal muscle, thyroid gland, pancreas, peripheral blood leukocytes, and bone marrow.

In terms of biological role, adapter protein involved in protein degradation by interacting with COP1 ubiquitin ligase. The COP1-binding motif is masked by autoinhibitory interactions with the protein kinase domain. Serves to alter COP1 substrate specificity by directing the activity of COP1 toward CEBPA. Binds selectively the recognition sequence of CEBPA. Regulates myeloid cell differentiation by altering the expression of CEBPA in a COP1-dependent manner. Controls macrophage, eosinophil and neutrophil differentiation via the COP1-binding domain. Interacts with MAPK kinases and regulates activation of MAP kinases, but has no kinase activity. This is Tribbles homolog 1 from Homo sapiens (Human).